The primary structure comprises 172 residues: Large ribosomal subunit protein uL10 (172 aa).

It belongs to the universal ribosomal protein uL10 family. Part of the ribosomal stalk of the 50S ribosomal subunit. The N-terminus interacts with L11 and the large rRNA to form the base of the stalk. The C-terminus forms an elongated spine to which L12 dimers bind in a sequential fashion forming a multimeric L10(L12)X complex.

Functionally, forms part of the ribosomal stalk, playing a central role in the interaction of the ribosome with GTP-bound translation factors. The polypeptide is Large ribosomal subunit protein uL10 (Xanthobacter autotrophicus (strain ATCC BAA-1158 / Py2)).